The following is a 248-amino-acid chain: Protein canopy homolog 4 (248 aa).

The signal sequence occupies residues 1–21 (MGPVRLGILLFLFLAVHEAWA). Intrachain disulfides connect Cys38-Cys196, Cys41-Cys184, and Cys94-Cys156. The tract at residues 200–248 (TWTGKEITDGEEKTEGEEEQEEEEEEEEEEGGDKMTKTGSHPKLDREDL) is disordered. Residues 213–230 (TEGEEEQEEEEEEEEEEG) show a composition bias toward acidic residues. Residues 231 to 248 (GDKMTKTGSHPKLDREDL) are compositionally biased toward basic and acidic residues.

It belongs to the canopy family. As to quaternary structure, interacts with TLR4.

It localises to the secreted. Plays a role in the regulation of the cell surface expression of TLR4. In Homo sapiens (Human), this protein is Protein canopy homolog 4 (CNPY4).